Reading from the N-terminus, the 250-residue chain is Ribosomal RNA-processing protein 15 (250 aa).

Basic and acidic residues predominate over residues 1–27 (MGSKHRVDTKDKKRTRKNAEFGREKRN). The tract at residues 1–101 (MGSKHRVDTK…NSKHDDGSTG (101 aa)) is disordered. 2 stretches are compositionally biased toward acidic residues: residues 43-53 (MEGDEAEEDEQ) and 67-83 (EQSD…EDDD). Ser-69 is modified (phosphoserine).

Belongs to the RRP15 family.

It is found in the nucleus. Its subcellular location is the nucleolus. Constituent of pre-60S ribosomal particles. Required for large subunit rRNA maturation, in particular processing of the 27S pre-rRNA at the A3 and B1 sites to yield 5.8S and 25S rRNA. In Saccharomyces cerevisiae (strain ATCC 204508 / S288c) (Baker's yeast), this protein is Ribosomal RNA-processing protein 15.